The following is a 131-amino-acid chain: MAKRNVTAKKKVVKKNIARGVVYISATFNNTNITITDEMGNVICWSTAGGLGFKGSKKSTPYAAQQAVESALSKAKEHGVKEVGIKVQGPGSGRETAIKSVGATEGIKVLWIKDITPLPHNGCRPPKRRRV.

It belongs to the universal ribosomal protein uS11 family. Part of the 30S ribosomal subunit. Interacts with proteins S7 and S18. Binds to IF-3.

Its function is as follows. Located on the platform of the 30S subunit, it bridges several disparate RNA helices of the 16S rRNA. Forms part of the Shine-Dalgarno cleft in the 70S ribosome. This Helicobacter pylori (strain ATCC 700392 / 26695) (Campylobacter pylori) protein is Small ribosomal subunit protein uS11.